The following is a 140-amino-acid chain: Protein NrdI (140 aa).

Belongs to the NrdI family.

In terms of biological role, probably involved in ribonucleotide reductase function. The chain is Protein NrdI from Photorhabdus laumondii subsp. laumondii (strain DSM 15139 / CIP 105565 / TT01) (Photorhabdus luminescens subsp. laumondii).